The chain runs to 294 residues: ATP synthase gamma chain (294 aa).

Belongs to the ATPase gamma chain family. In terms of assembly, F-type ATPases have 2 components, CF(1) - the catalytic core - and CF(0) - the membrane proton channel. CF(1) has five subunits: alpha(3), beta(3), gamma(1), delta(1), epsilon(1). CF(0) has three main subunits: a, b and c.

It is found in the cell inner membrane. In terms of biological role, produces ATP from ADP in the presence of a proton gradient across the membrane. The gamma chain is believed to be important in regulating ATPase activity and the flow of protons through the CF(0) complex. In Parvibaculum lavamentivorans (strain DS-1 / DSM 13023 / NCIMB 13966), this protein is ATP synthase gamma chain.